Consider the following 121-residue polypeptide: Flagellar hook-basal body complex protein FliE (121 aa).

Belongs to the FliE family.

Its subcellular location is the bacterial flagellum basal body. This Saccharophagus degradans (strain 2-40 / ATCC 43961 / DSM 17024) protein is Flagellar hook-basal body complex protein FliE.